A 193-amino-acid chain; its full sequence is Fe/S biogenesis protein NfuA (193 aa).

Cys149 and Cys152 together coordinate [4Fe-4S] cluster.

The protein belongs to the NfuA family. Homodimer. [4Fe-4S] cluster is required as a cofactor.

Involved in iron-sulfur cluster biogenesis. Binds a 4Fe-4S cluster, can transfer this cluster to apoproteins, and thereby intervenes in the maturation of Fe/S proteins. Could also act as a scaffold/chaperone for damaged Fe/S proteins. This is Fe/S biogenesis protein NfuA from Psychromonas ingrahamii (strain DSM 17664 / CCUG 51855 / 37).